The sequence spans 339 residues: tRNA (cytidine(56)-2'-O)-methyltransferase (339 aa).

S-adenosyl-L-methionine contacts are provided by residues Leu79 and 105–109; that span reads GSEKV. In terms of domain architecture, HD spans 188 to 295; the sequence is LIEHVKAVEG…VAQADNLFAG (108 aa).

This sequence belongs to the aTrm56 family. In terms of assembly, homodimer.

It is found in the cytoplasm. It carries out the reaction cytidine(56) in tRNA + S-adenosyl-L-methionine = 2'-O-methylcytidine(56) in tRNA + S-adenosyl-L-homocysteine + H(+). Its function is as follows. Specifically catalyzes the AdoMet-dependent 2'-O-ribose methylation of cytidine at position 56 in tRNAs. This Thermoplasma acidophilum (strain ATCC 25905 / DSM 1728 / JCM 9062 / NBRC 15155 / AMRC-C165) protein is tRNA (cytidine(56)-2'-O)-methyltransferase.